We begin with the raw amino-acid sequence, 459 residues long: Putrescine aminotransferase (459 aa).

Residues 150 to 151 (GT) and Gln274 contribute to the pyridoxal 5'-phosphate site. Lys300 carries the N6-(pyridoxal phosphate)lysine modification. Thr332 is a pyridoxal 5'-phosphate binding site.

The protein belongs to the class-III pyridoxal-phosphate-dependent aminotransferase family. Putrescine aminotransferase subfamily. Pyridoxal 5'-phosphate serves as cofactor.

It catalyses the reaction an alkane-alpha,omega-diamine + 2-oxoglutarate = an omega-aminoaldehyde + L-glutamate. The catalysed reaction is putrescine + 2-oxoglutarate = 1-pyrroline + L-glutamate + H2O. It carries out the reaction cadaverine + 2-oxoglutarate = 5-aminopentanal + L-glutamate. It functions in the pathway amine and polyamine degradation; putrescine degradation; 4-aminobutanal from putrescine (transaminase route): step 1/1. Its function is as follows. Catalyzes the aminotransferase reaction from putrescine to 2-oxoglutarate, leading to glutamate and 4-aminobutanal, which spontaneously cyclizes to form 1-pyrroline. This is the first step in one of two pathways for putrescine degradation, where putrescine is converted into 4-aminobutanoate (gamma-aminobutyrate or GABA) via 4-aminobutanal. Also functions as a cadaverine transaminase in a a L-lysine degradation pathway to succinate that proceeds via cadaverine, glutarate and L-2-hydroxyglutarate. The sequence is that of Putrescine aminotransferase from Escherichia coli O6:H1 (strain CFT073 / ATCC 700928 / UPEC).